The primary structure comprises 102 residues: Small ribosomal subunit protein uS10 (102 aa).

This sequence belongs to the universal ribosomal protein uS10 family. In terms of assembly, part of the 30S ribosomal subunit.

Involved in the binding of tRNA to the ribosomes. This chain is Small ribosomal subunit protein uS10, found in Streptococcus sanguinis (strain SK36).